A 367-amino-acid chain; its full sequence is Mitochondrial distribution and morphology protein 34 (367 aa).

Positions 1–197 constitute an SMP-LTD domain; sequence MSFNFTWPEF…LPSIIHRLSQ (197 aa). Disordered stretches follow at residues 267–311 and 347–367; these read QGLK…ALSS and PAHR…FHLS. Positions 286–302 are enriched in polar residues; it reads FHTTSRVRVPSSLESNA.

This sequence belongs to the MDM34 family. In terms of assembly, component of the ER-mitochondria encounter structure (ERMES) or MDM complex, composed of MMM1, MDM10, MDM12 and MDM34.

Its subcellular location is the mitochondrion outer membrane. Functionally, component of the ERMES/MDM complex, which serves as a molecular tether to connect the endoplasmic reticulum (ER) and mitochondria. Components of this complex are involved in the control of mitochondrial shape and protein biogenesis, and function in nonvesicular lipid trafficking between the ER and mitochondria. MDM34 is required for the interaction of the ER-resident membrane protein MMM1 and the outer mitochondrial membrane-resident beta-barrel protein MDM10. This chain is Mitochondrial distribution and morphology protein 34, found in Malassezia globosa (strain ATCC MYA-4612 / CBS 7966) (Dandruff-associated fungus).